We begin with the raw amino-acid sequence, 126 residues long: Fluoride-specific ion channel FluC (126 aa).

A run of 4 helical transmembrane segments spans residues 1-21, 40-60, 72-92, and 104-124; these read MIVIFVGLAGVLGALMRFGLD, LATLSVNVLGSFIIGLAGGFA, AISIGIAGGLTTFSSFAVATV, and MVNIGLNLVLGLGAAWLGLSL. The Na(+) site is built by Gly79 and Thr82.

The protein belongs to the fluoride channel Fluc/FEX (TC 1.A.43) family.

The protein resides in the cell membrane. The catalysed reaction is fluoride(in) = fluoride(out). Its activity is regulated as follows. Na(+) is not transported, but it plays an essential structural role and its presence is essential for fluoride channel function. Its function is as follows. Fluoride-specific ion channel. Important for reducing fluoride concentration in the cell, thus reducing its toxicity. The polypeptide is Fluoride-specific ion channel FluC (Renibacterium salmoninarum (strain ATCC 33209 / DSM 20767 / JCM 11484 / NBRC 15589 / NCIMB 2235)).